The sequence spans 262 residues: MPKHILIFDSGIGGLSVYKEIKYQLPLAKYIYAFDNAAFPYGELTESVLIERTTHIISKLCSKFPIDIVVIACNTASTVVLPSLREKLDIPVVGVVPAIKPAALVSNKIGLLATPATVKRSYTYDLIKSFAPISDVQLLGSTRLVEMAEEKMIGIDVDITELKEILSPWQNKVDTIVLGCTHFPFLKNEIKKALGNKILLIDSGEAIARRVKQLLNGDEVESAVLFEGEVFCSAPSIKEEALNHTFKELNFSSLQCLGYPKF.

Substrate contacts are provided by residues 9 to 10 and 41 to 42; these read DS and YG. Cys-73 serves as the catalytic Proton donor/acceptor. 74-75 contacts substrate; it reads NT. Cys-180 (proton donor/acceptor) is an active-site residue. A substrate-binding site is contributed by 181–182; the sequence is TH.

The protein belongs to the aspartate/glutamate racemases family.

The catalysed reaction is L-glutamate = D-glutamate. It participates in cell wall biogenesis; peptidoglycan biosynthesis. Functionally, provides the (R)-glutamate required for cell wall biosynthesis. The protein is Glutamate racemase of Aliivibrio fischeri (strain ATCC 700601 / ES114) (Vibrio fischeri).